We begin with the raw amino-acid sequence, 591 residues long: Formate--tetrahydrofolate ligase (591 aa).

ATP is bound at residue 74–81 (TPLGEGKS).

Belongs to the formate--tetrahydrofolate ligase family.

The enzyme catalyses (6S)-5,6,7,8-tetrahydrofolate + formate + ATP = (6R)-10-formyltetrahydrofolate + ADP + phosphate. It functions in the pathway one-carbon metabolism; tetrahydrofolate interconversion. The chain is Formate--tetrahydrofolate ligase from Desulfovibrio desulfuricans (strain ATCC 27774 / DSM 6949 / MB).